Reading from the N-terminus, the 1380-residue chain is MVQQTFTGRKRVRKFFGHIREVAEMPNLIEVQKASYDQFLMVDEPEGGRLDEGLQAVFKSVFPINDFSGASQLEFVRYEFEAPKYDVDECRQRGMTYAAPLKVTLRLIVFDIDEETGAKSVKDIKEQDVYMGDIPLMTMNGTFVVNGTERVIVSQMHRSPGVFFDHDKGKTHSSGKLLFAARVIPYRGSWLDIEFDAKDIVFARIDRRRKIPVTSLMFALGLDGEEILSTFYKKIIYKRAKSGGGSDGWRVPYDPVRFRGYSTLNDLIDADTGKVVLEAGKKLTVRAARQLQEKGLKALRMSDEELVGMYLAEDLVNPKTGEIYAEAGEEITEKSLKALNEEGYKELPLLDIDHVNVGPYIRNTLAADKNMTREDALFDIYRVMRPGEPPTLESAQNMFQSLFFDAERYDLSAVGRVKMNMRLDLDAPDTYRTLRKEDILAVIKTLVDLRDGKGEIDDIDHLGNRRVRSVGELMENQYRVGLLRMERAIKERMSSVDIDTVMPQDLINAKPAAAAVREFFGSSQLSQFMDQTNPLSEITHKRRLSALGPGGLTRERAGFEVRDVHPTHYGRICPIETPEGPNIGLINSLATFARVNKYGFVETPYRKVKDGRVTDEVVYLSAMEEGRYHVAQANLPLDARGRFTEDLVVCRHAGEVLPVTPDKVDFMDVSPKQLVSVAAALIPFLENDDANRALMGSNMQRQAVPLVRAEAPFVGTGMEGVVARDSGAAIAARRSGVIDQIDATRVVIRATEDLDPTKSGVDIYRLMKYQRSNQSTCINQRPLVKVGDIVRKGDIIADGPSTDLGELALGRNVLVAFMPWNGYNFEDSILLSERIVKEDVFTSIHIEEFEVMARDTKLGPEEITRDIPNVSEEALKSLDEAGIVYIGAEVRAGDILVGKITPKGESPMTPEEKLLRAIFGEKASDVRDTSLRVPPGVQGTIVEVRVFNRHGVDKDERALAIEREEIERLAKDRDDEQAILDRNVYGRLADLLENRQGIAGPKGFKKDTKITRAVLDEYPKSQWWLFASPNDKLMAEIEAMRKQYDESKKGLEQRFLDKVEKLQRGDELPPGVMKMVKVFVAVKRKIQPGDKMAGRHGNKGVVSKIVPIEDMPFLEDGTHADIVLNPLGVPSRMNVGQILETHLGWACAGLGRRIGQAVDAYLASAKQETKPLKETLKKVYGDNETIKSLEDHELVELGRNLRRGVPIATPVFDGAKEADIEQMLELAGMDKSGQSTVYDGRTGDPFDRKVTVGYIYMLKLHHLVDDKIHARSIGPYSLVTQQPLGGKAQFGGQRFGEMEVWALEAYGAAYTLQEMLTVKSDDVAGRTKVYEAIVRGDDTFEAGIPESFNVLVKEMRSLGLNVDLHNSKIGDMMPTSEAAE.

This sequence belongs to the RNA polymerase beta chain family. In terms of assembly, the RNAP catalytic core consists of 2 alpha, 1 beta, 1 beta' and 1 omega subunit. When a sigma factor is associated with the core the holoenzyme is formed, which can initiate transcription.

The enzyme catalyses RNA(n) + a ribonucleoside 5'-triphosphate = RNA(n+1) + diphosphate. DNA-dependent RNA polymerase catalyzes the transcription of DNA into RNA using the four ribonucleoside triphosphates as substrates. In Nitrobacter winogradskyi (strain ATCC 25391 / DSM 10237 / CIP 104748 / NCIMB 11846 / Nb-255), this protein is DNA-directed RNA polymerase subunit beta.